Here is a 232-residue protein sequence, read N- to C-terminus: Pyridoxal 5'-phosphate synthase subunit PdxS (232 aa).

The Schiff-base intermediate with D-ribose 5-phosphate role is filled by Lys-23. Gly-95 lines the D-ribose 5-phosphate pocket. A D-glyceraldehyde 3-phosphate-binding site is contributed by Arg-107. Residues Gly-156 and 177-178 (GS) each bind D-ribose 5-phosphate.

The protein belongs to the PdxS/SNZ family. In terms of assembly, in the presence of PdxT, forms a dodecamer of heterodimers.

The catalysed reaction is aldehydo-D-ribose 5-phosphate + D-glyceraldehyde 3-phosphate + L-glutamine = pyridoxal 5'-phosphate + L-glutamate + phosphate + 3 H2O + H(+). It participates in cofactor biosynthesis; pyridoxal 5'-phosphate biosynthesis. In terms of biological role, catalyzes the formation of pyridoxal 5'-phosphate from ribose 5-phosphate (RBP), glyceraldehyde 3-phosphate (G3P) and ammonia. The ammonia is provided by the PdxT subunit. Can also use ribulose 5-phosphate and dihydroxyacetone phosphate as substrates, resulting from enzyme-catalyzed isomerization of RBP and G3P, respectively. The chain is Pyridoxal 5'-phosphate synthase subunit PdxS from Clostridium novyi.